We begin with the raw amino-acid sequence, 953 residues long: Atromentin synthetase invA2 (953 aa).

Residues 38-460 (RAVSQYPNHE…SGRIKDTVIV (423 aa)) are adenylation (A) domain. A Carrier domain is found at 592–670 (APSTETEKTL…SLAKYVDSLI (79 aa)). Residues 597 to 667 (TEKTLAGIYA…VISSLAKYVD (71 aa)) are thiolation and peptide carrier (T) domain. Serine 629 carries the O-(pantetheine 4'-phosphoryl)serine modification. Residues 693–795 (PIFMVHPGVG…FTGLINIPPH (103 aa)) form a thioesterase (TE) domain region.

The protein belongs to the ATP-dependent AMP-binding enzyme family.

It participates in secondary metabolite biosynthesis. An L-tyrosine:2-oxoglutarate aminotransferase (probably invD) and atromentin synthetase invA2 catalyze consecutive steps to turn over L-tyrosine into atromentin, which represents the generic precursor molecule for the entire terphenylquinone and pulvinic acid family of pigments, which are widely distributed secondary metabolites in homobasidiomycetes. The first step catalyzed by the aminotransferase converts L-tyrosine in to 4-hydroxyphenylpyruvate (4-HPP). Adenylation of two 4-HPP monomers by the invA2 adenylation (A) domain, covalent tethering of the monomers as a thioester and oxoester onto the invA2 thiolation (T) and thioesterase (TE) domains, respectively, and symmetric C-C-bond formation between two monomers catalyzed by the invA2 TE domain leads to atromentin. This is Atromentin synthetase invA2 (invA2) from Paxillus involutus (Naked brimcap).